The following is a 584-amino-acid chain: AP-1-like transcription factor yap1 (584 aa).

The interval 23–179 (LAALSSNQPP…AFRERKEKHL (157 aa)) is disordered. The short motif at 35–42 (QQNDKQRS) is the Bipartite nuclear localization signal element. Residues 36-48 (QNDKQRSQAKTDP) are compositionally biased toward basic and acidic residues. Over residues 52-67 (PGNMSSGSFSMSPGFN) the composition is skewed to low complexity. Residues 68–75 (KTHPGSGG) carry the Bipartite nuclear localization signal motif. Positions 79 to 94 (GDDESPFLDFNPELDF) are enriched in acidic residues. 2 stretches are compositionally biased toward basic and acidic residues: residues 112-144 (SEEH…DKAA) and 170-179 (AFRERKEKHL). The 64-residue stretch at 154 to 217 (SEPTSKRKAQ…ERLQVELREY (64 aa)) folds into the bZIP domain. Residues 159–180 (KRKAQNRAAQRAFRERKEKHLK) are basic motif. Positions 182 to 189 (LETKVDEL) are leucine-zipper. The transcription activation 1 stretch occupies residues 211 to 332 (QVELREYRKR…PSPKVPSVYN (122 aa)). Disordered regions lie at residues 267–379 (IFNG…TKLN) and 418–441 (RGKS…TPGP). Positions 284–296 (SSPATSDSQVPGV) are n-CRD. The span at 300-309 (ETLNGSNNRG) shows a compositional bias: polar residues. Over residues 336–362 (SASSHDSSNSCSPSSSSDSHQSQMLSS) the composition is skewed to low complexity. Composition is skewed to polar residues over residues 363-379 (NGTS…TKLN) and 422-437 (ESVS…NYEQ). Residues 377 to 480 (KLNDSVQNHH…SQDFGTFFDD (104 aa)) form a transcription activation 2 region. 3 disulfide bridges follow: Cys-531-Cys-555, Cys-531-Cys-564, and Cys-555-Cys-564. Positions 531–564 (CTKIWDRLQSMEKFRNGEIDVDNLCSELRTKARC) are c-CRD. The Nuclear export signal motif lies at 549 to 556 (IDVDNLCS).

The protein belongs to the bZIP family. YAP subfamily. Post-translationally, depending on the oxidative stress inducing agent, yap1 can undergo two distinct conformational changes, both involving disulfide bond formation, and both masking the nuclear export signal, thus abolishing nuclear export.

The protein localises to the nucleus. The protein resides in the cytoplasm. In terms of biological role, transcription activator involved in oxidative stress response and redox homeostasis. Regulates the transcription of genes encoding antioxidant enzymes and components of the cellular thiol-reducing pathways. May be involved in antifungal resistance to voriconazole. The protein is AP-1-like transcription factor yap1 of Aspergillus flavus (strain ATCC 200026 / FGSC A1120 / IAM 13836 / NRRL 3357 / JCM 12722 / SRRC 167).